Reading from the N-terminus, the 370-residue chain is tRNA-specific 2-thiouridylase MnmA (370 aa).

ATP contacts are provided by residues 10–17 (AMSGGVDS) and Met-36. The active-site Nucleophile is the Cys-111. Cysteines 111 and 209 form a disulfide. Position 135 (Gly-135) interacts with ATP. The interval 159-161 (KDQ) is interaction with tRNA. Cys-209 acts as the Cysteine persulfide intermediate in catalysis.

It belongs to the MnmA/TRMU family.

The protein localises to the cytoplasm. The catalysed reaction is S-sulfanyl-L-cysteinyl-[protein] + uridine(34) in tRNA + AH2 + ATP = 2-thiouridine(34) in tRNA + L-cysteinyl-[protein] + A + AMP + diphosphate + H(+). Catalyzes the 2-thiolation of uridine at the wobble position (U34) of tRNA, leading to the formation of s(2)U34. The protein is tRNA-specific 2-thiouridylase MnmA of Koribacter versatilis (strain Ellin345).